The primary structure comprises 146 residues: Single-stranded DNA-binding protein, mitochondrial (146 aa).

Residues 1–16 (MLRNASAQILKQFVRH) constitute a mitochondrion transit peptide. Residues 29–140 (INKVQILGRV…IIADNIVFLS (112 aa)) form the SSB domain.

The protein localises to the mitochondrion. It localises to the mitochondrion matrix. It is found in the mitochondrion nucleoid. In terms of biological role, binds preferentially and cooperatively to pyrimidine rich single-stranded DNA (ss-DNA). May be required to maintain the copy number of mitochondrial DNA (mtDNA) and play a crucial role during mtDNA replication. Required for retinal ganglion cell differentiation and retinal integrity. The sequence is that of Single-stranded DNA-binding protein, mitochondrial from Danio rerio (Zebrafish).